The following is a 131-amino-acid chain: Profilin-1 (131 aa).

The protein belongs to the profilin family. As to quaternary structure, occurs in many kinds of cells as a complex with monomeric actin in a 1:1 ratio.

It localises to the cytoplasm. Its subcellular location is the cytoskeleton. In terms of biological role, binds to actin and affects the structure of the cytoskeleton. At high concentrations, profilin prevents the polymerization of actin, whereas it enhances it at low concentrations. By binding to PIP2, it inhibits the formation of IP3 and DG. In Hordeum vulgare (Barley), this protein is Profilin-1 (PRO1).